The following is a 628-amino-acid chain: Nucleoside-triphosphatase 1 (628 aa).

Residues methionine 1 to glycine 25 form the signal peptide. Glutamate 236 acts as the Proton acceptor in catalysis. Asparagine 432 is a glycosylation site (N-linked (GlcNAc...) asparagine).

Belongs to the GDA1/CD39 NTPase family. As to quaternary structure, homotetramer.

The protein localises to the secreted. It localises to the parasitophorous vacuole. It catalyses the reaction a ribonucleoside 5'-triphosphate + H2O = a ribonucleoside 5'-diphosphate + phosphate + H(+). May perform an important processing step in the conversion of high energy nucleotides prior to uptake by the parasite and may contribute to intracellular survival and virulence. NTPAse-I has a specific activity 4.5-fold higher than NTPAse-II in hydrolysis of ATP. The primary difference between these isozymes lies in their ability to hydrolyze nucleoside triphosphate versus diphosphate substrates. While NTPAse-II hydrolyzes ATP to ADP and ADP to AMP at almost the same rate, NTPAse-I hydrolyzes ADP to AMP at a much slower rate (0.7% of the rate for ATP). The sequence is that of Nucleoside-triphosphatase 1 (NTP3) from Toxoplasma gondii.